A 144-amino-acid chain; its full sequence is UPF0292 protein MA_4098 (144 aa).

In terms of domain architecture, Toprim spans glycine 28–leucine 109. Mg(2+) contacts are provided by glutamate 34, aspartate 78, and aspartate 80.

This sequence belongs to the UPF0292 family. The cofactor is Mg(2+).

In Methanosarcina acetivorans (strain ATCC 35395 / DSM 2834 / JCM 12185 / C2A), this protein is UPF0292 protein MA_4098.